The primary structure comprises 197 residues: MAPTTVIADNNCNEESSNSFEMEIEAESAILEQIQNKMAKNLESAAYVPPTEEEQKAIDAKSVFIGNVDFNSTIEEVEEHFKGCGHIVRTTIPKDKFTKKQKNFAYIEFDDSSSIENALVMNGSLFRSRPIVVTAKRTNIPGMGHGVRGSSRGTFGRGRGAARGAPGRQQTVVVKYVYVNGPNRGGRGGRGRRFNPY.

An RRM domain is found at 61–138 (KSVFIGNVDF…RPIVVTAKRT (78 aa)). The interval 142 to 166 (GMGHGVRGSSRGTFGRGRGAARGAP) is disordered.

This is Putative RNA-binding protein EEED8.12 from Caenorhabditis elegans.